An 846-amino-acid polypeptide reads, in one-letter code: Patched domain-containing protein 4 (846 aa).

10 consecutive transmembrane segments (helical) span residues His41–Leu61, Ser230–Leu250, Gly265–Ile285, Thr293–Leu313, Val336–Ser356, Val373–Ala393, Pro465–Ile485, Pro660–Ile680, Phe686–Trp706, and Leu718–Leu738. One can recognise an SSD domain in the interval Ala233 to Phe392. The N-linked (GlcNAc...) asparagine glycan is linked to Asn762. 2 helical membrane passes run Ser765–Phe785 and Cys787–Leu807.

It belongs to the patched family.

It localises to the membrane. Its function is as follows. Could act as a repressor of canonical hedgehog signaling by antagonizing the effects of SMO, as suggested by down-regulation of hedgehog target genes, including GLI1, PTCH1, and PTCH2 in PTCHD4-expressing cells. The sequence is that of Patched domain-containing protein 4 (PTCHD4) from Homo sapiens (Human).